Consider the following 155-residue polypeptide: Basic phospholipase A2 PC1 (155 aa).

A signal peptide spans 1–21; sequence MYPAHLLVLLAVCVSLLGASA. Positions 22-27 are excised as a propeptide; sequence ISNRPR. Intrachain disulfides connect cysteine 38–cysteine 98, cysteine 54–cysteine 144, cysteine 56–cysteine 72, cysteine 71–cysteine 125, cysteine 78–cysteine 118, cysteine 87–cysteine 111, and cysteine 105–cysteine 116. Positions 55, 57, and 59 each coordinate Ca(2+). Residue histidine 75 is part of the active site. Aspartate 76 contributes to the Ca(2+) binding site. The active site involves aspartate 119.

It belongs to the phospholipase A2 family. Group I subfamily. D49 sub-subfamily. The cofactor is Ca(2+). In terms of tissue distribution, expressed by the venom gland.

The protein localises to the secreted. It carries out the reaction a 1,2-diacyl-sn-glycero-3-phosphocholine + H2O = a 1-acyl-sn-glycero-3-phosphocholine + a fatty acid + H(+). Its function is as follows. Snake venom phospholipase A2 (PLA2) that inhibits neuromuscular transmission by blocking acetylcholine release from the nerve termini. PLA2 catalyzes the calcium-dependent hydrolysis of the 2-acyl groups in 3-sn-phosphoglycerides. This Laticauda colubrina (Yellow-lipped sea krait) protein is Basic phospholipase A2 PC1.